A 183-amino-acid polypeptide reads, in one-letter code: Acyl-homoserine-lactone synthase (183 aa).

This sequence belongs to the autoinducer synthase family.

The catalysed reaction is a fatty acyl-[ACP] + S-adenosyl-L-methionine = an N-acyl-L-homoserine lactone + S-methyl-5'-thioadenosine + holo-[ACP] + H(+). Functionally, involved in the synthesis of the acyl-homoserine lactone (AHL) signal N-(3-hydroxydodecanoyl)-L-HSL (3-hydroxy-C(12)-HSL or OH-dDHL). Probably part of a quorum-sensing system with AnoR. The chain is Acyl-homoserine-lactone synthase from Acinetobacter nosocomialis.